A 105-amino-acid chain; its full sequence is ESAT-6-like protein EsxU (105 aa).

This sequence belongs to the WXG100 family. CFP-10 subfamily. Forms a tight 1:1 complex with EsxT. Complex formation results in induction of alpha-helical conformation and stability against chemical denaturation.

It localises to the secreted. In Mycobacterium tuberculosis (strain ATCC 25618 / H37Rv), this protein is ESAT-6-like protein EsxU.